Here is a 417-residue protein sequence, read N- to C-terminus: Squalene synthase (417 aa).

2 residues coordinate NADP(+): R52 and R77. The Mg(2+) site is built by D80, E83, and D84. R218 contacts NADP(+). Residues 284 to 304 (SVFNFCAIPQVMAIATLAACY) traverse the membrane as a helical segment. The NADP(+) site is built by K315 and R317. A helical transmembrane segment spans residues 384-404 (PIYLSFVMLLAALSWQYLTTL).

Belongs to the phytoene/squalene synthase family. Mg(2+) serves as cofactor. As to expression, widely expressed.

Its subcellular location is the endoplasmic reticulum membrane. The catalysed reaction is 2 (2E,6E)-farnesyl diphosphate + NADPH + H(+) = squalene + 2 diphosphate + NADP(+). It carries out the reaction 2 (2E,6E)-farnesyl diphosphate + NADH + H(+) = squalene + 2 diphosphate + NAD(+). The enzyme catalyses 2 (2E,6E)-farnesyl diphosphate = presqualene diphosphate + diphosphate. It catalyses the reaction presqualene diphosphate + NADH + H(+) = squalene + diphosphate + NAD(+). The catalysed reaction is presqualene diphosphate + NADPH + H(+) = squalene + diphosphate + NADP(+). The protein operates within terpene metabolism; lanosterol biosynthesis; lanosterol from farnesyl diphosphate: step 1/3. Catalyzes the condensation of 2 farnesyl pyrophosphate (FPP) moieties to form squalene. Proceeds in two distinct steps. In the first half-reaction, two molecules of FPP react to form the stable presqualene diphosphate intermediate (PSQPP), with concomitant release of a proton and a molecule of inorganic diphosphate. In the second half-reaction, PSQPP undergoes heterolysis, isomerization, and reduction with NADPH or NADH to form squalene. It is the first committed enzyme of the sterol biosynthesis pathway. This Homo sapiens (Human) protein is Squalene synthase (FDFT1).